A 215-amino-acid chain; its full sequence is LysM and putative peptidoglycan-binding domain-containing protein 2 (215 aa).

The segment at 1–40 (MADLSPAPALREGGPRAHRPSAPSPPPRSRSTSEPEEAEL) is disordered. Position 2 is an N-acetylalanine (Ala2). Phosphoserine occurs at positions 5, 24, 33, and 57. Residues 71–115 (VEHRVRAGDTLQGIALKYGVTMEQIKRANKLFTNDCIFLKKTLSI) enclose the LysM domain. Disordered stretches follow at residues 135-176 (ESET…EVSA) and 195-215 (RKLKEESRDEESPYAASLYHS). Positions 145–156 (QEEEPVVSEEEL) are enriched in acidic residues. Residues 157-169 (PPPSPQDPDPKPA) show a composition bias toward pro residues. Positions 196–205 (KLKEESRDEE) are enriched in basic and acidic residues.

This is LysM and putative peptidoglycan-binding domain-containing protein 2 (Lysmd2) from Mus musculus (Mouse).